A 118-amino-acid polypeptide reads, in one-letter code: Ribosome-binding factor A (118 aa).

Belongs to the RbfA family. As to quaternary structure, monomer. Binds 30S ribosomal subunits, but not 50S ribosomal subunits or 70S ribosomes.

It is found in the cytoplasm. One of several proteins that assist in the late maturation steps of the functional core of the 30S ribosomal subunit. Associates with free 30S ribosomal subunits (but not with 30S subunits that are part of 70S ribosomes or polysomes). Required for efficient processing of 16S rRNA. May interact with the 5'-terminal helix region of 16S rRNA. The polypeptide is Ribosome-binding factor A (Thermodesulfovibrio yellowstonii (strain ATCC 51303 / DSM 11347 / YP87)).